The sequence spans 375 residues: Chaperone protein DnaJ (375 aa).

A J domain is found at D5–G70. A CR-type zinc finger spans residues G136 to E214. Zn(2+) is bound by residues C149, C152, C166, C169, C188, C191, C202, and C205. 4 CXXCXGXG motif repeats span residues C149–G156, C166–G173, C188–G195, and C202–G209.

This sequence belongs to the DnaJ family. In terms of assembly, homodimer. Requires Zn(2+) as cofactor.

It localises to the cytoplasm. In terms of biological role, participates actively in the response to hyperosmotic and heat shock by preventing the aggregation of stress-denatured proteins and by disaggregating proteins, also in an autonomous, DnaK-independent fashion. Unfolded proteins bind initially to DnaJ; upon interaction with the DnaJ-bound protein, DnaK hydrolyzes its bound ATP, resulting in the formation of a stable complex. GrpE releases ADP from DnaK; ATP binding to DnaK triggers the release of the substrate protein, thus completing the reaction cycle. Several rounds of ATP-dependent interactions between DnaJ, DnaK and GrpE are required for fully efficient folding. Also involved, together with DnaK and GrpE, in the DNA replication of plasmids through activation of initiation proteins. The chain is Chaperone protein DnaJ from Rhizobium etli (strain CIAT 652).